A 318-amino-acid polypeptide reads, in one-letter code: MFPSPALTHTPFSVKDILNLEQQQRSLAAGDLSARLEATLAPASCMLAAFKPDGYSGPEAAAPGLAELRAELGPAPSPPKCSPAFPTAPTFYPRAYGDPDPAKDPRADKKELCALQKAVELDKAETDGAERRRPRRRRKPRVLFSQAQVYELERRFKQQRYLSPAERDQLASVLKLTSTQVKIWFQNRRYKCKRQRQDQTLELLGPPPPPARRIAVPVLVRDGKPCLGDSAAYAPAYGLGLNAYGYNAYPYPGYGGAACSPAYSCAAYPAAPPAAHAPAASANSNFVNFGVGDLNTVQSPGMPQGNSGVSTLHGIRAW.

Residues 137–196 (RRKPRVLFSQAQVYELERRFKQQRYLSPAERDQLASVLKLTSTQVKIWFQNRRYKCKRQR) constitute a DNA-binding region (homeobox).

This sequence belongs to the NK-2 homeobox family. In terms of assembly, homodimer (via the homeobox); binds DNA as homodimer. Interacts (via the homeobox) with TBX5 (via the T-box); this complex binds DNA. Interacts with HIPK1 and HIPK2, but not HIPK3. Interacts with the C-terminal zinc finger of GATA4 through its homeobox domain. Also interacts with JARID2 which represses its ability to activate transcription of ANF. Interacts with FBLIM1. Interacts with TBX18. Interacts with histone methyltransferase NSD2 (via HMG box). Interacts with NEDD9. Interacts with TBX1.

The protein localises to the nucleus. Transcription factor required for the development of the heart and the spleen. During heart development, acts as a transcriptional activator of NPPA/ANF in cooperation with GATA4. May cooperate with TBX2 to negatively modulate expression of NPPA/ANF in the atrioventricular canal. Binds to the core DNA motif of NPPA promoter. Together with PBX1, required for spleen development through a mechanism that involves CDKN2B repression. Positively regulates transcription of genes such as COL3A1 and MMP2, resulting in increased pulmonary endothelial fibrosis in response to hypoxia. The protein is Homeobox protein Nkx-2.5 (Nkx2-5) of Rattus norvegicus (Rat).